Reading from the N-terminus, the 455-residue chain is DENN domain-containing protein 11 (455 aa).

The tract at residues 1 to 59 (MVEQGDAAPLLRWAEGPAVSVPQDPALQAGGWVRGGSGEGRVAAEAPRRREPDEPAPPE) is disordered. An N-acetylvaline modification is found at Val2. The 173-residue stretch at 15–187 (EGPAVSVPQD…QLEMPGHYSH (173 aa)) folds into the uDENN domain. Arg41 carries the omega-N-methylarginine modification. The region spanning 214 to 362 (WLPSIHRYMY…INSADREKYR (149 aa)) is the cDENN domain. Residues 364 to 455 (LNEQRQMLLY…MLVIDNPCCP (92 aa)) enclose the dDENN domain.

Belongs to the DENND11 family.

Its function is as follows. Probable guanine nucleotide exchange factor (GEF). May promote the exchange of GDP to GTP, converting inactive GDP-bound small GTPases into their active GTP-bound form. May play a role in neuritogenesis, as well as in neuronal recovery and/or restructuring in the hippocampus following transient cerebral ischemia. The sequence is that of DENN domain-containing protein 11 (Dennd11) from Mus musculus (Mouse).